Reading from the N-terminus, the 346-residue chain is 4-hydroxy-2-oxovalerate aldolase (346 aa).

A Pyruvate carboxyltransferase domain is found at 8–260 (VTLHDMSLRD…ETGIDLYKIM (253 aa)). 16-17 (RD) contributes to the substrate binding site. Aspartate 17 is a binding site for Mn(2+). Residue histidine 20 is the Proton acceptor of the active site. Substrate is bound by residues serine 170 and histidine 199. Mn(2+) is bound by residues histidine 199 and histidine 201. Residue tyrosine 290 coordinates substrate.

It belongs to the 4-hydroxy-2-oxovalerate aldolase family.

The enzyme catalyses (S)-4-hydroxy-2-oxopentanoate = acetaldehyde + pyruvate. This Stutzerimonas stutzeri (Pseudomonas stutzeri) protein is 4-hydroxy-2-oxovalerate aldolase (nahM).